The chain runs to 200 residues: Putative HMP/thiamine-binding protein YkoF (200 aa).

Thiamine-binding residues include Leu-17 and Thr-49.

In terms of assembly, homodimer in vitro. In vivo, may be a part of an ABC transporter complex which is composed of two ATP-binding proteins (YkoD), two transmembrane proteins (YkoC and YkoE) and a solute-binding protein (YkoF).

Its function is as follows. Part of the ABC transporter complex YkoCDEF that could transport hydroxymethylpyrimidine (HMP) and/or thiamine. Could also transport other HMP-containing products. Binds thiamine via its HMP moiety. The protein is Putative HMP/thiamine-binding protein YkoF (ykoF) of Bacillus subtilis (strain 168).